A 323-amino-acid chain; its full sequence is uncharacterized protein (323 aa).

This is an uncharacterized protein from Thermotoga maritima (strain ATCC 43589 / DSM 3109 / JCM 10099 / NBRC 100826 / MSB8).